Reading from the N-terminus, the 214-residue chain is Glycoprotein Q2 (214 aa).

The N-terminal stretch at 1-19 is a signal peptide; that stretch reads MHFLVVYILIHFHAYRGMA. 4 N-linked (GlcNAc...) asparagine; by host glycosylation sites follow: Asn41, Asn74, Asn110, and Asn210.

In terms of assembly, interacts with isoform gQ1. The heterodimer gQ1-gQ2 associates with the glycoprotein complex gH-gL to form a tetrameric complex. The gH/gL/gQ1/gQ2 complex binds to human receptor CD46. Glycosylated by host.

The protein resides in the virion membrane. It localises to the host endoplasmic reticulum-Golgi intermediate compartment. In terms of biological role, plays a role in virus entry by participating in host receptor binding at the cell surface. In Human herpesvirus 6A (strain Uganda-1102) (HHV-6 variant A), this protein is Glycoprotein Q2.